A 262-amino-acid polypeptide reads, in one-letter code: Global transcriptional regulator CodY (262 aa).

The tract at residues Met-1–Leu-159 is GAF domain. Residues Ala-207–Arg-226 constitute a DNA-binding region (H-T-H motif).

The protein belongs to the CodY family.

Its subcellular location is the cytoplasm. In terms of biological role, DNA-binding global transcriptional regulator which is involved in the adaptive response to starvation and acts by directly or indirectly controlling the expression of numerous genes in response to nutrient availability. During rapid exponential growth, CodY is highly active and represses genes whose products allow adaptation to nutrient depletion. This chain is Global transcriptional regulator CodY, found in Streptococcus gordonii (strain Challis / ATCC 35105 / BCRC 15272 / CH1 / DL1 / V288).